The sequence spans 87 residues: Small ribosomal subunit protein uS17 (87 aa).

It belongs to the universal ribosomal protein uS17 family. In terms of assembly, part of the 30S ribosomal subunit.

One of the primary rRNA binding proteins, it binds specifically to the 5'-end of 16S ribosomal RNA. The sequence is that of Small ribosomal subunit protein uS17 from Alkalilimnicola ehrlichii (strain ATCC BAA-1101 / DSM 17681 / MLHE-1).